The following is a 392-amino-acid chain: Serine protease ea (392 aa).

A signal peptide spans 1 to 19 (MLKPSIICLFLGILAKSSA). A propeptide spans 20 to 127 (GQFYFPNEAA…GQCGNILSNR (108 aa)) (activation peptide). The 54-residue stretch at 36-89 (RCITPNRERALCIHLEDCKYLYGLLTTTPLRDTDRLYLSRSQCGYTNGKVLICC) folds into the Clip domain. Disulfide bonds link C37–C88, C47–C78, and C53–C89. An N-linked (GlcNAc...) asparagine glycan is attached at N107. Intrachain disulfides connect C120–C260, C158–C174, C202–C212, C307–C324, and C334–C367. The 264-residue stretch at 128-391 (IYGGMKTKID…YVDWIQNTIE (264 aa)) folds into the Peptidase S1 domain. H173 acts as the Charge relay system in catalysis. The Ca(2+) site is built by E193, D195, T198, and D201. D240 serves as the catalytic Charge relay system. Residue S338 is the Charge relay system of the active site.

It belongs to the peptidase S1 family. CLIP subfamily. In terms of assembly, interacts with Spn27A; the two proteins are covalently linked leading to inhibition of ea catalytic activity. Interacts (via Peptidase domain) with snk (via N-terminal prodomain); leads to proteolytic activation of ea by snk. Sulfation of a vitelline membrane component by pip is required for proteolytic cleavage of ea by snk but not for the interaction of ea with snk. Post-translationally, proteolytically cleaved by snk. Activation peptide and active catalytic domain remain associated by a disulfide bond. Processed ea/easter is present in extremely low amounts in the early embryo as it is rapidly converted into a high molecular mass complex made up of ea covalently bound to the serpin Spn27A. Zymogen activation is also controlled by a negative feedback loop from Dorsal.

It localises to the secreted. Activated proteolytically by snk; activation requires both activation of the ndl-gd-snk protease cascade and sulfation of a vitelline membrane component by pip. Inhibited by binding of the serpin Spn27A. Component of the extracellular signaling pathway that establishes the dorsal-ventral pathway of the embryo. A protease cascade involving ndl, gd, snk and ea results in activation of the spz Toll receptor ligand; acts downstream of ndl, gd and snk and is required for proteolytic processing of spz. Activation of ea requires both activation of the ndl-gd-snk protease cascade and sulfation of a vitelline membrane component by pip. Localized activation of the Toll receptor in the ventral region of the embryo defines cell identities along the dorsal-ventral continuum. This is Serine protease ea from Drosophila melanogaster (Fruit fly).